A 101-amino-acid polypeptide reads, in one-letter code: UPF0235 protein Cphamn1_2066 (101 aa).

It belongs to the UPF0235 family.

This chain is UPF0235 protein Cphamn1_2066, found in Chlorobium phaeobacteroides (strain BS1).